Reading from the N-terminus, the 258-residue chain is Envelope glycoprotein L (258 aa).

Residues 1-31 (MYECMFFSHRLTIGFYIPLIVLTTMSSLSES) form the signal peptide. The region spanning 36-243 (QKTACTVAAI…ILYQASLSGP (208 aa)) is the gL betaherpesvirus-type domain. C145 and C150 are oxidised to a cystine.

The protein belongs to the herpesviridae glycoprotein L (gL) family. Betaherpesvirinae gL subfamily. Interacts with glycoprotein H (gH); this interaction is necessary for the correct processing and cell surface expression of gH. Forms the envelope pentamer complex (PC) composed of gH, gL, UL128, UL130, and UL131A. The pentamer interacts with host NRP2. Forms the envelope trimer complex composed of gH, gL, and gO. The trimer interacts with host PDGFRA.

Its subcellular location is the virion membrane. The protein localises to the host cell membrane. It is found in the host Golgi apparatus. The protein resides in the host trans-Golgi network. In terms of biological role, the heterodimer glycoprotein H-glycoprotein L is required for the fusion of viral and plasma membranes leading to virus entry into the host cell. Acts as a functional inhibitor of gH and maintains gH in an inhibited form. Upon binding to host integrins, gL dissociates from gH leading to activation of the viral fusion glycoproteins gB and gH. In human cytomegalovirus, forms two distincts complexes to mediate viral entry, a trimer and a pentamer at the surface of the virion envelope. The gH-gL-gO trimer is required for infection in fibroblasts by interacting with host PDGFRA. The gH-gL-UL128-UL130-UL131A pentamer is essential for viral entry in epithelial, endothelial and myeloid cells via interaction with host NRP2. This chain is Envelope glycoprotein L, found in Guinea pig cytomegalovirus (strain 22122) (GPCMV).